Here is a 245-residue protein sequence, read N- to C-terminus: Protein mlo1 (245 aa).

An SAP domain is found at 4–38 (YKSLKVAELREKLAEKGLSTAGNKAELVSRLTAAT). The tract at residues 32 to 245 (SRLTAATESN…AERFGVAAKN (214 aa)) is disordered. The span at 37 to 52 (ATESNDENTSNNNATD) shows a compositional bias: low complexity. Residues 58-70 (PPEDDIDWGDMEN) show a composition bias toward acidic residues. The span at 109-118 (TSQAPETSTG) shows a compositional bias: polar residues. The segment covering 119–130 (AEEHQETTEESK) has biased composition (basic and acidic residues). Serine 139 is subject to Phosphoserine. Low complexity predominate over residues 182–196 (SSNNKNHNQSKNPQN).

The protein belongs to the SAP domain-containing ribonucleoprotein family.

This is Protein mlo1 (mlo1) from Schizosaccharomyces pombe (strain 972 / ATCC 24843) (Fission yeast).